A 595-amino-acid polypeptide reads, in one-letter code: Sialic acid-binding Ig-like lectin 12 (595 aa).

The N-terminal stretch at 1–18 (MLLLLLLLPPLLCGRVGA) is a signal peptide. 2 consecutive Ig-like V-type domains span residues 19 to 142 (KEQK…VNVT) and 143 to 269 (ASQD…VHVT). Topologically, residues 19–481 (KEQKDYLLTM…RPISGVTLGA (463 aa)) are extracellular. A disulfide bond links cysteine 44 and cysteine 104. Residues asparagine 140, asparagine 179, asparagine 230, and asparagine 290 are each glycosylated (N-linked (GlcNAc...) asparagine). Disulfide bonds link cysteine 166–cysteine 299, cysteine 171–cysteine 231, and cysteine 293–cysteine 342. The 84-residue stretch at 275-358 (PTFSIPGTLE…AGVTMTRAVR (84 aa)) folds into the Ig-like C2-type 1 domain. N-linked (GlcNAc...) asparagine glycans are attached at residues asparagine 360, asparagine 367, and asparagine 385. An Ig-like C2-type 2 domain is found at 365–462 (PQNLTMTVFQ…GSQHISLSLS (98 aa)). Cysteine 401 and cysteine 446 are disulfide-bonded. Residues 482–502 (FGGAGATALVFLYFCIIFVVV) form a helical membrane-spanning segment. Over 503–595 (RSCRKKSARP…YEYSEINIPK (93 aa)) the chain is Cytoplasmic. The interval 512–560 (PAVGVGDTGMEDANAVRGSASQGPLIESPADDSPPHHAPPALATPSPEE) is disordered. Positions 563–568 (IQYASL) match the ITIM motif motif. Phosphotyrosine is present on residues tyrosine 565 and tyrosine 588. The SLAM-like motif motif lies at 586 to 591 (YEYSEI).

This sequence belongs to the immunoglobulin superfamily. SIGLEC (sialic acid binding Ig-like lectin) family. Isoform Short is highly expressed in spleen, small intestine and adrenal gland; it is lower expressed in thyroid, placenta, brain, stomach, bone marrow, spinal cord and breast. Isoform Long is highly expressed in spleen, small intestine and bone marrow; it is lower expressed in thyroid, placenta, thymus, trachea, stomach, lung, adrenal gland, fetal brain and testis.

It is found in the membrane. In terms of biological role, putative adhesion molecule that mediates sialic-acid dependent binding to cells. The sialic acid recognition site may be masked by cis interactions with sialic acids on the same cell surface. This Homo sapiens (Human) protein is Sialic acid-binding Ig-like lectin 12 (SIGLEC12).